We begin with the raw amino-acid sequence, 361 residues long: MAAAEEPKPKKLKVEAPQALSENVLFGMGNPLLDISAVVDKDFLDKYSLKPNDQILAEEKHKELFDELVRKFKVEYHAGGSTQNSIKVAQWMIQKPHKAATFFGCIGIDKFGEILKSKAAEAHVDAHYYEQNEQPTGTCAACITGDNRSLVANLAAANCYKKEKHLDLENNWVLVEKARVYYIAGFFLTVSPESVLKVARYAAENNRIFTLNLSAPFISQFFKESLMEVMPYVDILFGNETEAATFAREQGFETKDIKEIAKKAQALAKVNSKRPRTVVFTQGRDDTVVATENEVMAFAVLDQNQKEIIDTNGAGDAFVGGFLSQLVYNKPLTECIRAGHYAASVIIRRTGCTFPEKPDFH.

The Nuclear localization signal signature appears at 7-15 (PKPKKLKVE). Residue D34 coordinates adenosine. S48 lines the Mg(2+) pocket. Y76 carries the post-translational modification Phosphotyrosine. D146 and N147 together coordinate Mg(2+). Position 305 (Q305) interacts with adenosine. D316 is a catalytic residue. D316 serves as the catalytic Proton acceptor.

This sequence belongs to the carbohydrate kinase PfkB family. Monomer. It depends on Mg(2+) as a cofactor. The N-terminus is blocked.

It is found in the nucleus. The catalysed reaction is adenosine + ATP = AMP + ADP + H(+). Its pathway is purine metabolism; AMP biosynthesis via salvage pathway; AMP from adenosine: step 1/1. Its activity is regulated as follows. Activity is inhibited by 5-iodotubercidin and 5'-amino-5'-deoxyadenosine. Its function is as follows. Catalyzes the phosphorylation of the purine nucleoside adenosine at the 5' position in an ATP-dependent manner. Serves as a potential regulator of concentrations of extracellular adenosine and intracellular adenine nucleotides. The chain is Adenosine kinase (ADK) from Cricetulus griseus (Chinese hamster).